The primary structure comprises 439 residues: Glutamine synthetase (439 aa).

The GS beta-grasp domain maps to 13-98 (ENVRFIRLQF…VICDVYTPDG (86 aa)). A GS catalytic domain is found at 105 to 439 (PRYRLRRMME…NWELQRYLYL (335 aa)). Mg(2+)-binding residues include Glu-128 and Glu-130. Glu-180 is an ATP binding site. Residues Glu-185 and Glu-192 each contribute to the Mg(2+) site. L-glutamate contacts are provided by residues 236-237 (NG) and Gly-237. His-241 is a binding site for Mg(2+). ATP is bound by residues 243–245 (HMS) and Ser-245. L-glutamate-binding residues include Arg-294, Glu-300, and Arg-312. Residues Arg-312, Arg-317, and Lys-324 each coordinate ATP. Glu-329 is a Mg(2+) binding site. Arg-331 contacts L-glutamate.

Belongs to the glutamine synthetase family. In terms of assembly, oligomer of 12 subunits arranged in the form of two hexagons. In its feedback-inhibited form, interacts with TnrA in order to block its DNA-binding activity. Mg(2+) is required as a cofactor.

Its subcellular location is the cytoplasm. The enzyme catalyses L-glutamate + NH4(+) + ATP = L-glutamine + ADP + phosphate + H(+). Inhibited by glutamine. Glutamine synthetase (GS) is an unusual multitasking protein that functions as an enzyme, a transcription coregulator, and a chaperone in ammonium assimilation and in the regulation of genes involved in nitrogen metabolism. It catalyzes the ATP-dependent biosynthesis of glutamine from glutamate and ammonia. Feedback-inhibited GlnA also interacts with and regulates the activity of the transcriptional regulator TnrA. During nitrogen limitation, TnrA is in its DNA-binding active state and turns on the transcription of genes required for nitrogen assimilation. Under conditions of nitrogen excess, feedback-inhibited GlnA forms a stable complex with TnrA, which inhibits its DNA-binding activity. In contrast, feedback-inhibited GlnA acts as a chaperone to stabilize the DNA-binding activity of GlnR, which represses the transcription of nitrogen assimilation genes. The chain is Glutamine synthetase from Thermotoga maritima (strain ATCC 43589 / DSM 3109 / JCM 10099 / NBRC 100826 / MSB8).